A 556-amino-acid polypeptide reads, in one-letter code: Potassium-transporting ATPase potassium-binding subunit (556 aa).

The next 10 helical transmembrane spans lie at 5–25 (LAGI…HVPL), 65–85 (SVLA…LVQG), 133–153 (GLAV…IALV), 176–196 (IRIL…GGAI), 249–269 (PTTW…FSLP), 283–303 (YAIV…TLFF), 377–397 (AGLY…GLMV), 415–435 (LAAT…AVAM), 483–503 (ALGL…LALA), and 526–546 (FVGM…LPML).

It belongs to the KdpA family. The system is composed of three essential subunits: KdpA, KdpB and KdpC.

The protein localises to the cell membrane. Its function is as follows. Part of the high-affinity ATP-driven potassium transport (or Kdp) system, which catalyzes the hydrolysis of ATP coupled with the electrogenic transport of potassium into the cytoplasm. This subunit binds the extracellular potassium ions and delivers the ions to the membrane domain of KdpB through an intramembrane tunnel. The chain is Potassium-transporting ATPase potassium-binding subunit from Mycolicibacterium vanbaalenii (strain DSM 7251 / JCM 13017 / BCRC 16820 / KCTC 9966 / NRRL B-24157 / PYR-1) (Mycobacterium vanbaalenii).